We begin with the raw amino-acid sequence, 174 residues long: Frataxin homolog, mitochondrial (174 aa).

A mitochondrion-targeting transit peptide spans 1–21 (MIKRSLASLVRVSSVMGRRYM).

It belongs to the frataxin family. In terms of assembly, monomer. Forms a 24-mer complex made up of 8 copies of a trimeric subcomplex. Increments in mitochondrial iron uptake induce stepwise assembly of species ranging from trimers to 24-mers. Interacts with ISU1 with a 1 to 1 stoichiometry; the interaction is direct. Interacts with YHB1, SDH1, SDH2, AIM45 and CIR1. In terms of processing, processed in two steps by mitochondrial processing peptidase (MPP). MPP first cleaves the precursor to intermediate form and subsequently converts the intermediate to mature size protein.

It localises to the mitochondrion matrix. It carries out the reaction 4 Fe(2+) + O2 + 4 H(+) = 4 Fe(3+) + 2 H2O. Functionally, promotes the biosynthesis of heme as well as the assembly and repair of iron-sulfur clusters by delivering Fe(2+) to proteins involved in these pathways. Plays a role in the protection against iron-catalyzed oxidative stress through its ability to catalyze the oxidation of Fe(2+) to Fe(3+). Can store large amounts of the metal in the form of a ferrihydrite mineral by oligomerization. May be involved in regulation of the mitochondrial electron transport chain. The chain is Frataxin homolog, mitochondrial from Saccharomyces cerevisiae (strain ATCC 204508 / S288c) (Baker's yeast).